A 398-amino-acid polypeptide reads, in one-letter code: Cytochrome P450 165B3 (398 aa).

A heme-binding site is contributed by Cys-347.

It belongs to the cytochrome P450 family. Heme is required as a cofactor.

It participates in antibiotic biosynthesis; vancomycin biosynthesis. In terms of biological role, involved in the coupling of aromatic side chains of the heptapeptide of vancomycin. This Amycolatopsis orientalis (Nocardia orientalis) protein is Cytochrome P450 165B3 (cyp165B3).